Consider the following 304-residue polypeptide: Non-specific ribonucleoside hydrolase RihC (304 aa).

His233 is an active-site residue.

The protein belongs to the IUNH family. RihC subfamily.

In terms of biological role, hydrolyzes both purine and pyrimidine ribonucleosides with a broad-substrate specificity. The polypeptide is Non-specific ribonucleoside hydrolase RihC (Escherichia coli O139:H28 (strain E24377A / ETEC)).